Reading from the N-terminus, the 308-residue chain is Oligopeptide transport ATP-binding protein AmiF (308 aa).

The region spanning valine 6–leucine 251 is the ABC transporter domain. Glycine 42–threonine 49 is a binding site for ATP.

This sequence belongs to the ABC transporter superfamily.

It localises to the cell membrane. Part of the binding-protein-dependent transport system for oligopeptides. Probably responsible for energy coupling to the transport system. This is Oligopeptide transport ATP-binding protein AmiF (amiF) from Streptococcus pneumoniae serotype 4 (strain ATCC BAA-334 / TIGR4).